The chain runs to 528 residues: Protein arginine N-methyltransferase 3 (528 aa).

The disordered stretch occupies residues 1 to 43 (MCSLAAGNGRGAELGPEPLELSDSGDDAGWEDEDADTEPAHGR). Cys2 is modified (N-acetylcysteine). Phosphoserine occurs at positions 22 and 24. The span at 23–37 (DSGDDAGWEDEDADT) shows a compositional bias: acidic residues. A C2H2-type zinc finger spans residues 46–69 (TPCLFCDRLFASAEETFSHCKLEH). Ser169 carries the phosphoserine modification. The segment at 184 to 528 (MKQFAQDFVM…NSSTQTYSLQ (345 aa)) is mediates interaction with ALDH1A1. Positions 214–528 (DGVYFSSYGH…NSSTQTYSLQ (315 aa)) constitute an SAM-dependent MTase PRMT-type domain. Residues Arg236, Gly260, Asp282, Ser284, Ile310, and Glu311 each contribute to the S-adenosyl-L-homocysteine site. Active-site residues include Glu326 and Glu335.

It belongs to the class I-like SAM-binding methyltransferase superfamily. Protein arginine N-methyltransferase family. In terms of assembly, monomer and homodimer. Interacts with EPB41L3 (via FERM domain); the interaction is direct and inhibits the protein-arginine N-methyltransferase activity of PRMT3. Interacts with the 40S ribosomal protein RPS2. Interacts with ALDH1A1; the interaction is direct, inhibits ALDH1A1 aldehyde dehydrogenase activity and is independent of the methyltransferase activity of PRMT3.

The protein resides in the cytoplasm. The protein localises to the cytosol. Its subcellular location is the nucleus. It carries out the reaction L-arginyl-[protein] + S-adenosyl-L-methionine = N(omega)-methyl-L-arginyl-[protein] + S-adenosyl-L-homocysteine + H(+). The enzyme catalyses L-arginyl-[protein] + 2 S-adenosyl-L-methionine = N(omega),N(omega)-dimethyl-L-arginyl-[protein] + 2 S-adenosyl-L-homocysteine + 2 H(+). With respect to regulation, inhibited by N-ethylmaleimide and high concentrations of zinc chloride. In terms of biological role, protein-arginine N-methyltransferase that catalyzes both the monomethylation and asymmetric dimethylation of the guanidino nitrogens of arginine residues in target proteins, and therefore falls into the group of type I methyltransferases. Catalyzes the asymmetric arginine dimethylation at multiple sites in the Arg/Gly-rich region of small ribosomal subunit protein uS5/RPS2. Also appears to methylate other ribosomal proteins. May regulate retinoic acid synthesis and signaling by inhibiting ALDH1A1 retinal dehydrogenase activity. Contributes to methylation of histone H4 'Arg-3', a specific tag for epigenetic transcriptional activation. Promotes osteogenesis. The polypeptide is Protein arginine N-methyltransferase 3 (Mus musculus (Mouse)).